The primary structure comprises 111 residues: Large ribosomal subunit protein uL22 (111 aa).

Belongs to the universal ribosomal protein uL22 family. As to quaternary structure, part of the 50S ribosomal subunit.

Functionally, this protein binds specifically to 23S rRNA; its binding is stimulated by other ribosomal proteins, e.g. L4, L17, and L20. It is important during the early stages of 50S assembly. It makes multiple contacts with different domains of the 23S rRNA in the assembled 50S subunit and ribosome. In terms of biological role, the globular domain of the protein is located near the polypeptide exit tunnel on the outside of the subunit, while an extended beta-hairpin is found that lines the wall of the exit tunnel in the center of the 70S ribosome. This Acholeplasma laidlawii protein is Large ribosomal subunit protein uL22.